The chain runs to 393 residues: Na(+)/H(+) antiporter NhaA (393 aa).

Transmembrane regions (helical) follow at residues 14-34, 60-80, 96-116, 125-145, 155-175, 179-199, 218-238, 263-283, 292-312, 330-350, and 362-382; these read AAGM…NWSV, LLLW…GLEV, MLPL…FLLF, AGWA…LTLL, VFLL…IALF, QVFW…AYMN, VCIL…GFFI, FLIV…GIVL, LGIA…FSWL, IVAV…ITLL, and YAKL…YLAL.

This sequence belongs to the NhaA Na(+)/H(+) (TC 2.A.33) antiporter family.

It localises to the cell inner membrane. The catalysed reaction is Na(+)(in) + 2 H(+)(out) = Na(+)(out) + 2 H(+)(in). Its function is as follows. Na(+)/H(+) antiporter that extrudes sodium in exchange for external protons. This is Na(+)/H(+) antiporter NhaA from Pectobacterium atrosepticum (strain SCRI 1043 / ATCC BAA-672) (Erwinia carotovora subsp. atroseptica).